The sequence spans 103 residues: Small ribosomal subunit protein uS10 (103 aa).

The protein belongs to the universal ribosomal protein uS10 family. Part of the 30S ribosomal subunit.

In terms of biological role, involved in the binding of tRNA to the ribosomes. The protein is Small ribosomal subunit protein uS10 of Polynucleobacter necessarius subsp. necessarius (strain STIR1).